The primary structure comprises 134 residues: Small ribosomal subunit protein uS8c (134 aa).

This sequence belongs to the universal ribosomal protein uS8 family. In terms of assembly, part of the 30S ribosomal subunit.

Its subcellular location is the plastid. The protein localises to the chloroplast. In terms of biological role, one of the primary rRNA binding proteins, it binds directly to 16S rRNA central domain where it helps coordinate assembly of the platform of the 30S subunit. In Ipomoea purpurea (Common morning glory), this protein is Small ribosomal subunit protein uS8c (rps8).